Reading from the N-terminus, the 399-residue chain is Enoyl-[acyl-carrier-protein] reductase [NADH] (399 aa).

NAD(+)-binding positions include 48 to 53 (GASTGY), 74 to 75 (FE), 111 to 112 (DA), and 139 to 140 (LA). Residue Y225 participates in substrate binding. Catalysis depends on Y235, which acts as the Proton donor. Residues K244 and 274–276 (VVT) contribute to the NAD(+) site.

It belongs to the TER reductase family. In terms of assembly, monomer.

The catalysed reaction is a 2,3-saturated acyl-[ACP] + NAD(+) = a (2E)-enoyl-[ACP] + NADH + H(+). The protein operates within lipid metabolism; fatty acid biosynthesis. Involved in the final reduction of the elongation cycle of fatty acid synthesis (FAS II). Catalyzes the reduction of a carbon-carbon double bond in an enoyl moiety that is covalently linked to an acyl carrier protein (ACP). The chain is Enoyl-[acyl-carrier-protein] reductase [NADH] from Yersinia pestis bv. Antiqua (strain Antiqua).